The chain runs to 226 residues: Lysosomal-associated transmembrane protein 4B (226 aa).

4 helical membrane-spanning segments follow: residues 26 to 46, 72 to 92, 100 to 120, and 153 to 173; these read ILLG…LLSA, MCIA…ATYG, WIIP…LVAV, and CLVL…GYLI. Residues 205-221 form a required for NEDD4 interaction region; the sequence is PPYDDATVNSATKEPPP.

Belongs to the LAPTM4/LAPTM5 transporter family. In terms of assembly, homooligomer; upon reaching the lysosomes. Interacts with MCOLN1. Interacts with NEDD4; may play a role in the lysosomal sorting of LAPTM4B; enhances HGS association with NEDD4; mediates inhibition of EGFR degradation. Interacts with PIP5K1C; promotes SNX5 association with LAPTM4B; kinase activity of PIP5K1C is required; interaction is regulated by phosphatidylinositol 4,5-bisphosphate generated by PIP5K1C. Interacts with HGS; promotes HGS ubiquitination. Interacts with SNX5. Interacts with SLC3A2 and SLC7A5; recruits SLC3A2 and SLC7A5 to lysosomes to promote leucine uptake into these organelles and is required for mTORC1 activation. Interacts with LRRC32; decreases TGFB1 production in regulatory T cells. Interacts with BECN1; competes with EGFR for LAPTM4B binding; regulates EGFR activity. Interacts with EGFR; positively correlates with EGFR activation. Post-translationally, undergoes proteolytic cleavage following delivery to the lysosomes. Ubiquitinated by NEDD4. Strongly expressed in fetal ovary, testis, adrenal gland, liver and uterus, and weakly expressed in the spleen.

It localises to the endomembrane system. The protein localises to the late endosome membrane. The protein resides in the cell membrane. It is found in the cell projection. Its subcellular location is the lysosome membrane. It localises to the endosome membrane. The protein localises to the endosome. The protein resides in the multivesicular body membrane. It is found in the multivesicular body lumen. Functionally, required for optimal lysosomal function. Blocks EGF-stimulated EGFR intraluminal sorting and degradation. Conversely by binding with the phosphatidylinositol 4,5-bisphosphate, regulates its PIP5K1C interaction, inhibits HGS ubiquitination and relieves LAPTM4B inhibition of EGFR degradation. Recruits SLC3A2 and SLC7A5 (the Leu transporter) to the lysosome, promoting entry of leucine and other essential amino acid (EAA) into the lysosome, stimulating activation of proton-transporting vacuolar (V)-ATPase protein pump (V-ATPase) and hence mTORC1 activation. Plays a role as negative regulator of TGFB1 production in regulatory T cells. Binds ceramide and facilitates its exit from late endosome in order to control cell death pathways. The protein is Lysosomal-associated transmembrane protein 4B of Bos taurus (Bovine).